The sequence spans 347 residues: N-acetyl-gamma-glutamyl-phosphate reductase (347 aa).

The active site involves Cys-153.

The protein belongs to the NAGSA dehydrogenase family. Type 1 subfamily.

The protein localises to the cytoplasm. It catalyses the reaction N-acetyl-L-glutamate 5-semialdehyde + phosphate + NADP(+) = N-acetyl-L-glutamyl 5-phosphate + NADPH + H(+). It participates in amino-acid biosynthesis; L-arginine biosynthesis; N(2)-acetyl-L-ornithine from L-glutamate: step 3/4. Functionally, catalyzes the NADPH-dependent reduction of N-acetyl-5-glutamyl phosphate to yield N-acetyl-L-glutamate 5-semialdehyde. The sequence is that of N-acetyl-gamma-glutamyl-phosphate reductase from Mycobacterium avium (strain 104).